Reading from the N-terminus, the 1839-residue chain is Mannuronan C5-epimerase AlgE3 (1839 aa).

PbH1 repeat units lie at residues 133–155, 157–179, 180–202, 204–226, 257–279, 280–302, 320–342, and 347–369; these read DRDV…DPHE, TINL…VADY, QVGG…NIVT, TNDF…VVQR, THDV…RVYG, AQDV…YAEV, TTGT…GIQE, and TDYS…RLYG. Residues 372–386 show a composition bias toward polar residues; it reads STVSEQPSSGQQATL. The segment at 372-392 is disordered; it reads STVSEQPSSGQQATLEGTAGN. Hemolysin-type calcium-binding repeat units follow at residues 387-399, 406-422, 424-440, 538-550, 557-573, 574-591, 695-709, 714-730, and 732-748; these read EGTA…SGTG, GLAG…DDTL, GGAG…ADTF, TGTE…SGTD, GYGG…NDIL, VGGA…ADVF, EGTD…TGAD, GLGG…DDVL, and GGAE…ADTF. PbH1 repeat units follow at residues 975–997, 999–1021, 1022–1044, 1046–1068, 1099–1121, 1122–1143, 1161–1183, and 1188–1210; these read DRNV…DPHE, TINL…VADY, LVDS…NVVT, TYDF…VIQR, TNNI…RLYG, TEDV…AYAE, TTGT…GIEE, and TDYS…RLNG. Positions 1215–1236 are enriched in polar residues; the sequence is VSDQPGTGQQATLEGTTGNDTL. Residues 1215–1238 form a disordered region; sequence VSDQPGTGQQATLEGTTGNDTLGG. Hemolysin-type calcium-binding repeat units follow at residues 1229 to 1243, 1247 to 1263, 1265 to 1281, 1398 to 1414, 1415 to 1432, 1536 to 1552, 1554 to 1571, 1670 to 1681, 1688 to 1704, and 1706 to 1722; these read GTTG…DAHE, GLDG…NDIL, GGVG…ADTF, GHAG…DDIL, VGGA…ADVF, EGTA…ADEV, HGGS…ADVF, GGDGNDTLSGGS, GGAG…NDIL, and GGAG…SDIF.

It belongs to the D-mannuronate C5-epimerase family. Ca(2+) is required as a cofactor.

The protein resides in the secreted. The catalysed reaction is [(1-&gt;4)-beta-D-mannuronosyl](n) = [alginate](n). The protein operates within glycan biosynthesis; alginate biosynthesis. With respect to regulation, inhibited by zinc. Its function is as follows. Converts beta-D-mannuronic acid (M) to alpha-L-guluronic acid (G), producing a polymer with gel-forming capacity, required for the formation of the cyst coat. The chain is Mannuronan C5-epimerase AlgE3 from Azotobacter vinelandii.